A 109-amino-acid chain; its full sequence is MPTSANKVETAWSALLAGAAETRQEHLAPSPLFILRQTLFCVLAAYLFCGAGMVWNDWIDRDIDANVARTKNRPLASGKVTTAQAFVWMALQVIASCAVLHVMLDGKDV.

2 consecutive transmembrane segments (helical) span residues 39 to 59 (LFCV…NDWI) and 84 to 104 (QAFV…HVML).

The protein belongs to the UbiA prenyltransferase family. Requires Mg(2+) as cofactor.

The protein resides in the membrane. The protein operates within secondary metabolite biosynthesis; terpenoid biosynthesis. Polyprenyl transferase; part of the gene cluster that mediates the biosynthesis of the immunosuppressants subglutinols, meroterpenoids consisting of an alpha-pyrone (4-hydroxy-5,6-dimethyl-2-pyrone) moiety attached to a decalin core fused to a five-membered cyclic ether carrying a prenylside chain. The first step of the pathway is the synthesis of the alpha-pyrone moiety by the polyketide synthase subA via condensation of one acetyl-CoA starter unit with 3 malonyl-CoA units and 2 methylations. The alpha-pyrone is then combined with geranylgeranyl pyrophosphate (GGPP) formed by the GGPP synthase subD through the action of the prenyltransferase subC to yield a linear alpha-pyrone diterpenoid. Subsequent steps in the subglutinol biosynthetic pathway involve the decalin core formation, which is thought to be initiated by the epoxidation of the C10-C11 olefin by the FAD-dependent oxidoreductase subE. The following cyclization cascade would be catalyzed by the terpene cyclase subB. Lastly, the FAD-dependent dehydrogenase subF probably catalyzes the five-membered cyclic ether formation to complete the formation of subglutinol A. Subsequent redox reactions appear to give rise to subglutinol C and D, however, it remains unclear which enzymes are responsible for these transformations. SubD may have secondary function in the conversion of the identified subglutinols to subglutinol analog 45, which seems to be the major product of the cluster. This chain is Polyprenyl transferase subC, found in Metarhizium robertsii (strain ARSEF 23 / ATCC MYA-3075) (Metarhizium anisopliae (strain ARSEF 23)).